Here is a 72-residue protein sequence, read N- to C-terminus: Small ribosomal subunit protein bS20 (72 aa).

This sequence belongs to the bacterial ribosomal protein bS20 family.

In terms of biological role, binds directly to 16S ribosomal RNA. In Klebsiella pneumoniae, this protein is Small ribosomal subunit protein bS20 (rpsT).